Consider the following 395-residue polypeptide: 8-amino-7-oxononanoate synthase (395 aa).

Substrate is bound at residue Arg24. 111-112 (GF) provides a ligand contact to pyridoxal 5'-phosphate. Position 136 (His136) interacts with substrate. Pyridoxal 5'-phosphate-binding positions include Ser184, 209–212 (DDAH), and 240–243 (TLSK). Lys243 is subject to N6-(pyridoxal phosphate)lysine. Thr357 contacts substrate.

It belongs to the class-II pyridoxal-phosphate-dependent aminotransferase family. BioF subfamily. In terms of assembly, homodimer. Pyridoxal 5'-phosphate serves as cofactor.

It catalyses the reaction 6-carboxyhexanoyl-[ACP] + L-alanine + H(+) = (8S)-8-amino-7-oxononanoate + holo-[ACP] + CO2. Its pathway is cofactor biosynthesis; biotin biosynthesis. Catalyzes the decarboxylative condensation of pimeloyl-[acyl-carrier protein] and L-alanine to produce 8-amino-7-oxononanoate (AON), [acyl-carrier protein], and carbon dioxide. This Alkaliphilus oremlandii (strain OhILAs) (Clostridium oremlandii (strain OhILAs)) protein is 8-amino-7-oxononanoate synthase.